We begin with the raw amino-acid sequence, 313 residues long: Aspartate carbamoyltransferase catalytic subunit (313 aa).

Carbamoyl phosphate is bound by residues arginine 58 and threonine 59. Residue lysine 86 participates in L-aspartate binding. 3 residues coordinate carbamoyl phosphate: arginine 108, histidine 136, and glutamine 139. Positions 169 and 223 each coordinate L-aspartate. Positions 265 and 266 each coordinate carbamoyl phosphate.

Belongs to the aspartate/ornithine carbamoyltransferase superfamily. ATCase family. Heterododecamer (2C3:3R2) of six catalytic PyrB chains organized as two trimers (C3), and six regulatory PyrI chains organized as three dimers (R2).

The enzyme catalyses carbamoyl phosphate + L-aspartate = N-carbamoyl-L-aspartate + phosphate + H(+). The protein operates within pyrimidine metabolism; UMP biosynthesis via de novo pathway; (S)-dihydroorotate from bicarbonate: step 2/3. Its function is as follows. Catalyzes the condensation of carbamoyl phosphate and aspartate to form carbamoyl aspartate and inorganic phosphate, the committed step in the de novo pyrimidine nucleotide biosynthesis pathway. This Anaeromyxobacter dehalogenans (strain 2CP-1 / ATCC BAA-258) protein is Aspartate carbamoyltransferase catalytic subunit.